A 129-amino-acid polypeptide reads, in one-letter code: Small ribosomal subunit protein uS11 (129 aa).

The protein belongs to the universal ribosomal protein uS11 family. In terms of assembly, part of the 30S ribosomal subunit. Interacts with proteins S7 and S18. Binds to IF-3.

Its function is as follows. Located on the platform of the 30S subunit, it bridges several disparate RNA helices of the 16S rRNA. Forms part of the Shine-Dalgarno cleft in the 70S ribosome. The sequence is that of Small ribosomal subunit protein uS11 from Sphingopyxis alaskensis (strain DSM 13593 / LMG 18877 / RB2256) (Sphingomonas alaskensis).